The sequence spans 163 residues: Transcription elongation factor GreA (163 aa).

The stretch at 11-38 (FKQLEKELDRLKKERPGVIQAIKEAREE) forms a coiled coil.

This sequence belongs to the GreA/GreB family.

Its function is as follows. Necessary for efficient RNA polymerase transcription elongation past template-encoded arresting sites. The arresting sites in DNA have the property of trapping a certain fraction of elongating RNA polymerases that pass through, resulting in locked ternary complexes. Cleavage of the nascent transcript by cleavage factors such as GreA or GreB allows the resumption of elongation from the new 3'terminus. GreA releases sequences of 2 to 3 nucleotides. This Nitratidesulfovibrio vulgaris (strain ATCC 29579 / DSM 644 / CCUG 34227 / NCIMB 8303 / VKM B-1760 / Hildenborough) (Desulfovibrio vulgaris) protein is Transcription elongation factor GreA.